The chain runs to 1554 residues: Protein TALPID3 (1554 aa).

Residues 57–68 (EHVHSADERRTE) are compositionally biased toward basic and acidic residues. Disordered stretches follow at residues 57–84 (EHVHSADERRTEIPPVNLPTASDTAGPE), 227–247 (AAEGSVPPGRTARTDSSSAGR), 312–396 (SIRL…SPER), 411–466 (TADN…TTVQ), and 489–523 (ADAFPVPNAKSTQSSRSRHLAPVATAPPPATAPIS). Positions 204-270 (LMKAQSEMEA…QRLQHLETIQ (67 aa)) form a coiled coil. Composition is skewed to polar residues over residues 312–321 (SIRLSATDNP), 360–391 (HWTSSTSTNRPPKSSFKNQGNGRLQDQSPNNR), 412–447 (ADNSQPEQSRESQMPSKASVTRSAQEDGSSFVNGQN), and 454–466 (EPTNVSSSSTTVQ). The span at 513 to 523 (TAPPPATAPIS) shows a compositional bias: pro residues. The tract at residues 553–639 (SMFEDAGLVL…SSERIVDAAV (87 aa)) is required for centrosomal localization. Positions 556–586 (EDAGLVLRQVRQSKKTLEENLEAILRAKDGE) form a coiled coil. Residues 639–650 (VSRREAGQRTRA) show a composition bias toward basic and acidic residues. 5 disordered regions span residues 639–687 (VSRR…AVKQ), 1079–1178 (GTPA…EPGS), 1214–1265 (QEES…SVTV), 1354–1374 (QSQQPEGWWEEESSGEVSEGQ), and 1500–1554 (KGED…NDVF). Over residues 1080 to 1089 (TPATLVQTQD) the composition is skewed to polar residues. Composition is skewed to pro residues over residues 1099–1115 (TPAPTPEPSLKDPPSPV) and 1230–1239 (QSPPAPPLPP). Positions 1240-1265 (VIQKSESSSSSSSSSSESSCSSSVTV) are enriched in low complexity. The segment covering 1535–1554 (ESVSLSSVEGDTDSSANDVF) has biased composition (polar residues).

Belongs to the TALPID3 family.

It is found in the cytoplasm. The protein resides in the cytoskeleton. Its subcellular location is the cilium basal body. It localises to the microtubule organizing center. The protein localises to the centrosome. It is found in the centriole. In terms of biological role, required for ciliogenesis and sonic hedgehog/SHH signaling. In Danio rerio (Zebrafish), this protein is Protein TALPID3 (talpid3).